A 485-amino-acid polypeptide reads, in one-letter code: Kynureninase 1 (485 aa).

Pyridoxal 5'-phosphate-binding positions include L155, T156, 183–186 (FPSD), D267, H270, and Y292. An N6-(pyridoxal phosphate)lysine modification is found at K293. Residues W330 and N358 each contribute to the pyridoxal 5'-phosphate site.

This sequence belongs to the kynureninase family. Homodimer. Pyridoxal 5'-phosphate serves as cofactor.

The protein localises to the cytoplasm. The enzyme catalyses L-kynurenine + H2O = anthranilate + L-alanine + H(+). It carries out the reaction 3-hydroxy-L-kynurenine + H2O = 3-hydroxyanthranilate + L-alanine + H(+). It participates in amino-acid degradation; L-kynurenine degradation; L-alanine and anthranilate from L-kynurenine: step 1/1. It functions in the pathway cofactor biosynthesis; NAD(+) biosynthesis; quinolinate from L-kynurenine: step 2/3. Its function is as follows. Catalyzes the cleavage of L-kynurenine (L-Kyn) and L-3-hydroxykynurenine (L-3OHKyn) into anthranilic acid (AA) and 3-hydroxyanthranilic acid (3-OHAA), respectively. The protein is Kynureninase 1 (kyn-1) of Neurospora crassa (strain ATCC 24698 / 74-OR23-1A / CBS 708.71 / DSM 1257 / FGSC 987).